The chain runs to 65 residues: Beta-defensin 41 (65 aa).

The first 19 residues, methionine 1–alanine 19, serve as a signal peptide directing secretion. 3 disulfide bridges follow: cysteine 35/cysteine 63, cysteine 42/cysteine 56, and cysteine 46/cysteine 64.

It belongs to the beta-defensin family. As to expression, isoform 2 is epididymis-specific and expressed mainly in the proximal caput.

Its subcellular location is the secreted. Has bactericidal activity. Its function is as follows. Isoform 2 may play a role in the antimicrobial protection of sperm and urogenital tract epithelia. The polypeptide is Beta-defensin 41 (Mus musculus (Mouse)).